The following is a 429-amino-acid chain: UDP-N-acetylglucosamine 1-carboxyvinyltransferase (429 aa).

22 to 23 (KN) contributes to the phosphoenolpyruvate binding site. Position 93 (Arg93) interacts with UDP-N-acetyl-alpha-D-glucosamine. Cys117 acts as the Proton donor in catalysis. A 2-(S-cysteinyl)pyruvic acid O-phosphothioketal modification is found at Cys117. UDP-N-acetyl-alpha-D-glucosamine contacts are provided by residues 122–126 (RPVDQ), Asp313, and Ile335.

It belongs to the EPSP synthase family. MurA subfamily.

It is found in the cytoplasm. The enzyme catalyses phosphoenolpyruvate + UDP-N-acetyl-alpha-D-glucosamine = UDP-N-acetyl-3-O-(1-carboxyvinyl)-alpha-D-glucosamine + phosphate. The protein operates within cell wall biogenesis; peptidoglycan biosynthesis. Its function is as follows. Cell wall formation. Adds enolpyruvyl to UDP-N-acetylglucosamine. The polypeptide is UDP-N-acetylglucosamine 1-carboxyvinyltransferase (Variovorax paradoxus (strain S110)).